Consider the following 155-residue polypeptide: Ribosome maturation factor RimP (155 aa).

Belongs to the RimP family.

It is found in the cytoplasm. Functionally, required for maturation of 30S ribosomal subunits. The protein is Ribosome maturation factor RimP of Bacteroides thetaiotaomicron (strain ATCC 29148 / DSM 2079 / JCM 5827 / CCUG 10774 / NCTC 10582 / VPI-5482 / E50).